Reading from the N-terminus, the 469-residue chain is Neuraminidase (469 aa).

Over 1 to 9 (MNPNQKIIT) the chain is Intravirion. Residues 10-30 (IGSVSLTIATVCFLMQIAILV) form a helical membrane-spanning segment. Positions 11 to 33 (GSVSLTIATVCFLMQIAILVTTV) are involved in apical transport and lipid raft association. Over 31 to 469 (TTVTLHFKQH…DGANINFMPI (439 aa)) the chain is Virion surface. A hypervariable stalk region region spans residues 36-88 (HFKQHECDSPASNQVMPCEPIIIERNITEIVYLNNTTIEKEICPEVVEYRNWS). Residues Asn61, Asn69, Asn70, and Asn86 are each glycosylated (N-linked (GlcNAc...) asparagine; by host). The head of neuraminidase stretch occupies residues 91–469 (QCQITGFAPF…DGANINFMPI (379 aa)). Cystine bridges form between Cys92–Cys417, Cys124–Cys129, Cys183–Cys230, Cys232–Cys237, Cys278–Cys291, Cys280–Cys289, Cys318–Cys337, and Cys421–Cys447. Position 118 (Arg118) interacts with substrate. Asn146 is a glycosylation site (N-linked (GlcNAc...) asparagine; by host). Asp151 functions as the Proton donor/acceptor in the catalytic mechanism. Arg152 contacts substrate. N-linked (GlcNAc...) asparagine; by host glycosylation is found at Asn200 and Asn234. 276–277 (EE) contacts substrate. A substrate-binding site is contributed by Arg292. 3 residues coordinate Ca(2+): Asp293, Gly297, and Asp324. Positions 324-350 (DTPRNDDRSSNSNCRNPNNERGNPGVK) are disordered. Residues 333-347 (SNSNCRNPNNERGNP) are compositionally biased toward low complexity. Arg371 provides a ligand contact to substrate. Asn402 is a glycosylation site (N-linked (GlcNAc...) asparagine; by host). Tyr406 acts as the Nucleophile in catalysis.

This sequence belongs to the glycosyl hydrolase 34 family. As to quaternary structure, homotetramer. It depends on Ca(2+) as a cofactor. In terms of processing, N-glycosylated.

Its subcellular location is the virion membrane. The protein resides in the host apical cell membrane. The enzyme catalyses Hydrolysis of alpha-(2-&gt;3)-, alpha-(2-&gt;6)-, alpha-(2-&gt;8)- glycosidic linkages of terminal sialic acid residues in oligosaccharides, glycoproteins, glycolipids, colominic acid and synthetic substrates.. Inhibited by the neuraminidase inhibitors zanamivir (Relenza) and oseltamivir (Tamiflu). These drugs interfere with the release of progeny virus from infected cells and are effective against all influenza strains. Resistance to neuraminidase inhibitors is quite rare. Catalyzes the removal of terminal sialic acid residues from viral and cellular glycoconjugates. Cleaves off the terminal sialic acids on the glycosylated HA during virus budding to facilitate virus release. Additionally helps virus spread through the circulation by further removing sialic acids from the cell surface. These cleavages prevent self-aggregation and ensure the efficient spread of the progeny virus from cell to cell. Otherwise, infection would be limited to one round of replication. Described as a receptor-destroying enzyme because it cleaves a terminal sialic acid from the cellular receptors. May facilitate viral invasion of the upper airways by cleaving the sialic acid moieties on the mucin of the airway epithelial cells. Likely to plays a role in the budding process through its association with lipid rafts during intracellular transport. May additionally display a raft-association independent effect on budding. Plays a role in the determination of host range restriction on replication and virulence. Sialidase activity in late endosome/lysosome traffic seems to enhance virus replication. In Aves (Human), this protein is Neuraminidase.